The primary structure comprises 506 residues: MDKFQSYLGLDRSQQHYFLYPLIFQEYIYVLAHDHGLNRSILLENAGYDNKSSLLIVKRLITRMYQQNHLILSVNDSKQTPFLGHNKNFYLQVMSEVSSIIMEIPLSLRLISSLEKKGVVKSDNLRSIHSIFSFLEDNFLHLNYVLDIPIPYPAHLEILVQALRYWIKDASSLHLLRFFLHECHNWDSLITSNSKKASSSFSKRNHRLFFFLYTSHVCEYESGFIFLRNQSSHLRSTSSGALLERIYFYGKLEHLAEVFARAFQANLWLFKDPFMHYVRYQGKSILASKGTFLLMNKWKYYFVNFWKSYFYLWSEPGRIYINQLSNHSLDFLGYRSSVRLKPSMVRSQMLENAFLINNAIKKFDTIVPIMPLIGSLAKSKFCNTLGHPIGKVIWANLSDSDIIDRFGRIYRNLSHYHSGSSKKKSLYRVKYILRLSCARTLARKHKSTVRAFLKRFGSELLEEFFTEEEQVFSLTFPKVSSISRRLSRRRIWYLDIICINDLANHE.

The protein belongs to the intron maturase 2 family. MatK subfamily.

Its subcellular location is the plastid. The protein resides in the chloroplast. Usually encoded in the trnK tRNA gene intron. Probably assists in splicing its own and other chloroplast group II introns. The polypeptide is Maturase K (Jurinea cyanoides).